The following is a 1604-amino-acid chain: E3 ubiquitin-protein ligase HECW1 (1604 aa).

The C2 domain maps to 182 to 318; that stretch reads SAAPIFKGIG…LERHAIGDRV (137 aa). 4 disordered regions span residues 350-539, 572-604, 642-667, and 727-826; these read DEEI…CSLP, PSAQ…LSEV, GIGA…QQGA, and STVF…TIDE. Over residues 362-380 the composition is skewed to polar residues; it reads SAETQDSIMNSMVGNSNGE. The segment covering 387 to 396 has biased composition (basic and acidic residues); sequence EFCKDAKPES. Over residues 398–412 the composition is skewed to polar residues; the sequence is SEGNGVNSSENQNQE. 2 stretches are compositionally biased toward acidic residues: residues 435-444 and 458-469; these read APEEPGELQD and EVAEGLPLDEDS. The span at 494–505 shows a compositional bias: basic and acidic residues; it reads GAREEEMQKGKD. Residues 580–589 are compositionally biased toward acidic residues; sequence TEEEDGLEEE. The span at 590 to 601 shows a compositional bias: basic and acidic residues; that stretch reads STLKESSEKDGL. Composition is skewed to polar residues over residues 654–667, 748–762, and 803–812; these read STGS…QQGA, DSVQ…STNG, and HNSQPISQLP. The WW 1 domain maps to 826 to 859; sequence EPLPPNWEARIDSHGRVFYVDHINRTTTWQRPSM. At Ser871 the chain carries Phosphoserine. Positions 871–898 form a coiled coil; sequence SVHQMEQLNRRYQNIQRTMATERAEEDS. The segment at 890 to 936 is disordered; it reads ATERAEEDSGNQNSEQIPDGGGGGGGGSDSEAESSQSSLDLRREGSL. Residues 908–917 are compositionally biased toward gly residues; sequence DGGGGGGGGS. A phosphoserine mark is found at Ser935 and Ser937. The WW 2 domain maps to 1016-1049; the sequence is LELPRGWEIKTDHQGKSFFVDHNSRATTFIDPRI. An HECT domain is found at 1269–1604; sequence SRKELQRNKL…VEETSTFGLE (336 aa). The Glycyl thioester intermediate role is filled by Cys1572.

As to quaternary structure, interacts with DVL1 and SSR3. As to expression, predominantly expressed in neurons of the spinal cord.

It localises to the cytoplasm. It carries out the reaction S-ubiquitinyl-[E2 ubiquitin-conjugating enzyme]-L-cysteine + [acceptor protein]-L-lysine = [E2 ubiquitin-conjugating enzyme]-L-cysteine + N(6)-ubiquitinyl-[acceptor protein]-L-lysine.. Its pathway is protein modification; protein ubiquitination. Its function is as follows. E3 ubiquitin-protein ligase that mediates ubiquitination and subsequent degradation of DVL1. In Mus musculus (Mouse), this protein is E3 ubiquitin-protein ligase HECW1 (Hecw1).